The chain runs to 314 residues: Acetyl-coenzyme A carboxylase carboxyl transferase subunit beta (314 aa).

Residues 25–294 enclose the CoA carboxyltransferase N-terminal domain; it reads VWTKCDSCSQ…PGTKPIVAEF (270 aa). The Zn(2+) site is built by Cys29, Cys32, Cys48, and Cys51. A C4-type zinc finger spans residues 29-51; it reads CDSCSQVLYRAELERNLEVCPKC.

Belongs to the AccD/PCCB family. As to quaternary structure, acetyl-CoA carboxylase is a heterohexamer composed of biotin carboxyl carrier protein (AccB), biotin carboxylase (AccC) and two subunits each of ACCase subunit alpha (AccA) and ACCase subunit beta (AccD). Zn(2+) is required as a cofactor.

The protein resides in the cytoplasm. It carries out the reaction N(6)-carboxybiotinyl-L-lysyl-[protein] + acetyl-CoA = N(6)-biotinyl-L-lysyl-[protein] + malonyl-CoA. It participates in lipid metabolism; malonyl-CoA biosynthesis; malonyl-CoA from acetyl-CoA: step 1/1. In terms of biological role, component of the acetyl coenzyme A carboxylase (ACC) complex. Biotin carboxylase (BC) catalyzes the carboxylation of biotin on its carrier protein (BCCP) and then the CO(2) group is transferred by the transcarboxylase to acetyl-CoA to form malonyl-CoA. The protein is Acetyl-coenzyme A carboxylase carboxyl transferase subunit beta of Photorhabdus laumondii subsp. laumondii (strain DSM 15139 / CIP 105565 / TT01) (Photorhabdus luminescens subsp. laumondii).